The chain runs to 143 residues: MRHYEIVFMVHPDQSEQVSGMIQRYTDLINAAEGKIHRLEDWGRRQLAYPINKLHKAHYVLMNIEAPQVVIDELETAFRYNDVVIRNMIMRTKDAVTEASPMAAAKEERRDDRREVKKDVAAAPVEAKEDSVEEKSEEAASEE.

Positions 96–143 (VTEASPMAAAKEERRDDRREVKKDVAAAPVEAKEDSVEEKSEEAASEE) are disordered. The span at 105–143 (AKEERRDDRREVKKDVAAAPVEAKEDSVEEKSEEAASEE) shows a compositional bias: basic and acidic residues.

This sequence belongs to the bacterial ribosomal protein bS6 family.

Binds together with bS18 to 16S ribosomal RNA. This Colwellia psychrerythraea (strain 34H / ATCC BAA-681) (Vibrio psychroerythus) protein is Small ribosomal subunit protein bS6.